A 236-amino-acid polypeptide reads, in one-letter code: 2-C-methyl-D-erythritol 4-phosphate cytidylyltransferase (236 aa).

This sequence belongs to the IspD/TarI cytidylyltransferase family. IspD subfamily. As to quaternary structure, homodimer.

The catalysed reaction is 2-C-methyl-D-erythritol 4-phosphate + CTP + H(+) = 4-CDP-2-C-methyl-D-erythritol + diphosphate. It functions in the pathway isoprenoid biosynthesis; isopentenyl diphosphate biosynthesis via DXP pathway; isopentenyl diphosphate from 1-deoxy-D-xylulose 5-phosphate: step 2/6. Functionally, catalyzes the formation of 4-diphosphocytidyl-2-C-methyl-D-erythritol from CTP and 2-C-methyl-D-erythritol 4-phosphate (MEP). The sequence is that of 2-C-methyl-D-erythritol 4-phosphate cytidylyltransferase from Klebsiella pneumoniae subsp. pneumoniae (strain ATCC 700721 / MGH 78578).